We begin with the raw amino-acid sequence, 498 residues long: Glycerol kinase (498 aa).

ADP is bound at residue Thr12. Residues Thr12, Thr13, and Ser14 each coordinate ATP. Thr12 is a binding site for sn-glycerol 3-phosphate. Arg16 provides a ligand contact to ADP. Positions 82, 83, 135, and 245 each coordinate sn-glycerol 3-phosphate. Residues Arg82, Glu83, Tyr135, Asp245, and Gln246 each contribute to the glycerol site. ADP contacts are provided by Thr267 and Gly310. Positions 267, 310, 314, and 411 each coordinate ATP. Positions 411 and 415 each coordinate ADP.

This sequence belongs to the FGGY kinase family. Homotetramer and homodimer (in equilibrium).

It carries out the reaction glycerol + ATP = sn-glycerol 3-phosphate + ADP + H(+). Its pathway is polyol metabolism; glycerol degradation via glycerol kinase pathway; sn-glycerol 3-phosphate from glycerol: step 1/1. Its activity is regulated as follows. Activated by phosphorylation and inhibited by fructose 1,6-bisphosphate (FBP). Its function is as follows. Key enzyme in the regulation of glycerol uptake and metabolism. Catalyzes the phosphorylation of glycerol to yield sn-glycerol 3-phosphate. This is Glycerol kinase from Clostridium botulinum (strain Alaska E43 / Type E3).